Consider the following 239-residue polypeptide: MAEWIYQYPPLLAGTLLQRYKRFFADIELESGEVITAHCPNTGPMTGISTPGSRVQVSRSNNPNRKLAYTWEMIQVEDTEPTWVGVNTGLPNQVTKLVLAAHLIPELGDYDQIRFEVPYGSEKSRVDFLLTGSDRPPTYVEVKSTTWTKGQLALFPDTVTTRGQKHIRELMALLPAHQAVMLYFINRGDCHQFAPGESADPVYAQLLRTAVAAGLQVLPCRFEITPEGICYLGLADLVL.

This sequence belongs to the SfsA family.

The sequence is that of Sugar fermentation stimulation protein homolog from Cyanothece sp. (strain PCC 7425 / ATCC 29141).